A 746-amino-acid polypeptide reads, in one-letter code: Polyribonucleotide nucleotidyltransferase (746 aa).

Residues D520 and D526 each contribute to the Mg(2+) site. One can recognise a KH domain in the interval 586–648; it reads PRIITVKVPV…EAARAAVNAI (63 aa). Residues 657–729 form the S1 motif domain; that stretch reads GERYLGTVVK…PRGKLSLVPV (73 aa).

This sequence belongs to the polyribonucleotide nucleotidyltransferase family. Mg(2+) serves as cofactor.

The protein resides in the cytoplasm. The catalysed reaction is RNA(n+1) + phosphate = RNA(n) + a ribonucleoside 5'-diphosphate. Functionally, involved in mRNA degradation. Catalyzes the phosphorolysis of single-stranded polyribonucleotides processively in the 3'- to 5'-direction. The polypeptide is Polyribonucleotide nucleotidyltransferase (Kineococcus radiotolerans (strain ATCC BAA-149 / DSM 14245 / SRS30216)).